A 235-amino-acid polypeptide reads, in one-letter code: Phosphoribosylaminoimidazole-succinocarboxamide synthase (235 aa).

The protein belongs to the SAICAR synthetase family.

The enzyme catalyses 5-amino-1-(5-phospho-D-ribosyl)imidazole-4-carboxylate + L-aspartate + ATP = (2S)-2-[5-amino-1-(5-phospho-beta-D-ribosyl)imidazole-4-carboxamido]succinate + ADP + phosphate + 2 H(+). It participates in purine metabolism; IMP biosynthesis via de novo pathway; 5-amino-1-(5-phospho-D-ribosyl)imidazole-4-carboxamide from 5-amino-1-(5-phospho-D-ribosyl)imidazole-4-carboxylate: step 1/2. In Streptococcus pneumoniae (strain JJA), this protein is Phosphoribosylaminoimidazole-succinocarboxamide synthase.